Reading from the N-terminus, the 73-residue chain is Small ribosomal subunit protein bS18 (73 aa).

Belongs to the bacterial ribosomal protein bS18 family. In terms of assembly, part of the 30S ribosomal subunit. Forms a tight heterodimer with protein bS6.

Its function is as follows. Binds as a heterodimer with protein bS6 to the central domain of the 16S rRNA, where it helps stabilize the platform of the 30S subunit. This Prochlorococcus marinus (strain MIT 9313) protein is Small ribosomal subunit protein bS18.